Consider the following 1893-residue polypeptide: Endoribonuclease Dicer (1893 aa).

A Helicase ATP-binding domain is found at 41–217 (LLEAALDHNT…DLEEKIQKLE (177 aa)). 54 to 61 (LNSGSGKT) is an ATP binding site. The short motif at 165–168 (DECH) is the DECH box element. The tract at residues 400 to 424 (VSWSDSEDDDDEDEEIEEKEKTETS) is disordered. Over residues 404–416 (DSEDDDDEDEEIE) the composition is skewed to acidic residues. The Helicase C-terminal domain occupies 424-593 (SFPSPFTNIL…SIDCGNTESE (170 aa)). Residues 621–713 (AIGHINRYCA…MPVGKETVKY (93 aa)) enclose the Dicer dsRNA-binding fold domain. The tract at residues 718 to 737 (DLHDEEETSVPGRPGSTKRR) is disordered. Positions 886–1036 (KFVEDIEKSE…LVPELCAIHP (151 aa)) constitute a PAZ domain. RNase III domains are found at residues 1249 to 1380 (TSDM…ETSG) and 1637 to 1795 (FENF…MDSG). Residues Glu-1293, Asp-1371, Glu-1374, Glu-1676, Asp-1781, and Glu-1784 each coordinate Mg(2+). One can recognise a DRBM domain in the interval 1820 to 1885 (VPRSPVRELL…ARRALRSLKA (66 aa)).

It belongs to the helicase family. Dicer subfamily. Component of the RISC loading complex (RLC), or micro-RNA (miRNA) loading complex (miRLC), which is composed of dicer1, ago2 and tarbp2; dicer1 and tarbp2 are required to process precursor miRNAs (pre-miRNAs) to mature miRNAs and then load them onto ago2. Note that the trimeric RLC/miRLC is also referred to as RISC. Requires Mg(2+) as cofactor. Mn(2+) serves as cofactor.

The protein resides in the cytoplasm. The catalysed reaction is Endonucleolytic cleavage to 5'-phosphomonoester.. Functionally, double-stranded RNA (dsRNA) endoribonuclease playing a central role in short dsRNA-mediated post-transcriptional gene silencing. Cleaves naturally occurring long dsRNAs and short hairpin pre-microRNAs (miRNA) into fragments of twenty-one to twenty-three nucleotides with 3' overhang of two nucleotides, producing respectively short interfering RNAs (siRNA) and mature microRNAs. SiRNAs and miRNAs serve as guide to direct the RNA-induced silencing complex (RISC) to complementary RNAs to degrade them or prevent their translation. Gene silencing mediated by siRNAs, also called RNA interference, controls the elimination of transcripts from mobile and repetitive DNA elements of the genome but also the degradation of exogenous RNA of viral origin for instance. The miRNA pathway on the other side is a mean to specifically regulate the expression of target genes. This is Endoribonuclease Dicer (dicer1) from Xenopus tropicalis (Western clawed frog).